The chain runs to 274 residues: MAGWLGELELVYAWRRGQTIPVRAYASAPLKLQRSFYPEGKPICHSVILHTAGGYVGGDRLHQKITLEPQCRVLLTTPAATKVYGRAQIPVEQTLHCHVADEAVLEWLPQETIIFAGAQFHQRLRIDLAPQAQVGLWEMTRFGRTARGEVFNRGYWRYHTEVWQGGVPLWIDRQRIEGTKMMLTAMNALQGCPLMGTLAWVGREVSSEQIQRLRDLAMGIQGEMGVSTLIRGVVCRYRGHSMAELRRWFVAAWQLLRPGQGSHPLVCYPRVWPR.

The protein belongs to the UreD family. UreD, UreF and UreG form a complex that acts as a GTP-hydrolysis-dependent molecular chaperone, activating the urease apoprotein by helping to assemble the nickel containing metallocenter of UreC. The UreE protein probably delivers the nickel.

It localises to the cytoplasm. Its function is as follows. Required for maturation of urease via the functional incorporation of the urease nickel metallocenter. The protein is Urease accessory protein UreD of Thermosynechococcus vestitus (strain NIES-2133 / IAM M-273 / BP-1).